A 390-amino-acid polypeptide reads, in one-letter code: uncharacterized protein (390 aa).

Transmembrane regions (helical) follow at residues 4-24 (IWLF…LSPL), 40-60 (GWMV…AGPI), 68-88 (TVML…GIAP), 98-118 (FAAG…IPVI), 130-150 (IATA…GFLA), 159-179 (FVLS…MPGI), 205-225 (VILL…SFLG), 236-256 (VSQI…GSLI), 273-293 (GMLL…LFLV), 295-315 (AGFF…MGVF), 329-349 (LSNA…GFLY), and 356-376 (GAVT…YQTI).

It belongs to the major facilitator superfamily.

It localises to the cell membrane. This is an uncharacterized protein from Bacillus subtilis (strain 168).